The chain runs to 86 residues: Large ribosomal subunit protein eL43 (86 aa).

The segment at Cys38–Cys60 adopts a C4-type zinc-finger fold.

Belongs to the eukaryotic ribosomal protein eL43 family. It depends on Zn(2+) as a cofactor.

In Desulfurococcus amylolyticus (strain DSM 18924 / JCM 16383 / VKM B-2413 / 1221n) (Desulfurococcus kamchatkensis), this protein is Large ribosomal subunit protein eL43.